Here is a 434-residue protein sequence, read N- to C-terminus: Enolase (434 aa).

Q163 provides a ligand contact to (2R)-2-phosphoglycerate. The active-site Proton donor is the E205. Mg(2+)-binding residues include D243, E291, and D318. (2R)-2-phosphoglycerate is bound by residues K343, R372, S373, and K394. The active-site Proton acceptor is the K343.

This sequence belongs to the enolase family. Mg(2+) serves as cofactor.

The protein resides in the cytoplasm. It localises to the secreted. The protein localises to the cell surface. It carries out the reaction (2R)-2-phosphoglycerate = phosphoenolpyruvate + H2O. It functions in the pathway carbohydrate degradation; glycolysis; pyruvate from D-glyceraldehyde 3-phosphate: step 4/5. Catalyzes the reversible conversion of 2-phosphoglycerate (2-PG) into phosphoenolpyruvate (PEP). It is essential for the degradation of carbohydrates via glycolysis. The polypeptide is Enolase (Fusobacterium nucleatum subsp. nucleatum (strain ATCC 25586 / DSM 15643 / BCRC 10681 / CIP 101130 / JCM 8532 / KCTC 2640 / LMG 13131 / VPI 4355)).